Consider the following 283-residue polypeptide: Pantothenate synthetase (283 aa).

30 to 37 (MGYLHEGH) is a binding site for ATP. His-37 (proton donor) is an active-site residue. Residue Gln-61 participates in (R)-pantoate binding. Gln-61 serves as a coordination point for beta-alanine. 147 to 150 (GQKD) is a binding site for ATP. (R)-pantoate is bound at residue Gln-153. ATP is bound by residues Val-176 and 184–187 (MSSR).

It belongs to the pantothenate synthetase family. Homodimer.

Its subcellular location is the cytoplasm. The enzyme catalyses (R)-pantoate + beta-alanine + ATP = (R)-pantothenate + AMP + diphosphate + H(+). Its pathway is cofactor biosynthesis; (R)-pantothenate biosynthesis; (R)-pantothenate from (R)-pantoate and beta-alanine: step 1/1. Functionally, catalyzes the condensation of pantoate with beta-alanine in an ATP-dependent reaction via a pantoyl-adenylate intermediate. This chain is Pantothenate synthetase, found in Thermoanaerobacter pseudethanolicus (strain ATCC 33223 / 39E) (Clostridium thermohydrosulfuricum).